Consider the following 276-residue polypeptide: Ribosomal RNA small subunit methyltransferase A (276 aa).

Positions 24, 26, 51, 72, 97, and 118 each coordinate S-adenosyl-L-methionine.

The protein belongs to the class I-like SAM-binding methyltransferase superfamily. rRNA adenine N(6)-methyltransferase family. RsmA subfamily.

It is found in the cytoplasm. It catalyses the reaction adenosine(1518)/adenosine(1519) in 16S rRNA + 4 S-adenosyl-L-methionine = N(6)-dimethyladenosine(1518)/N(6)-dimethyladenosine(1519) in 16S rRNA + 4 S-adenosyl-L-homocysteine + 4 H(+). Functionally, specifically dimethylates two adjacent adenosines (A1518 and A1519) in the loop of a conserved hairpin near the 3'-end of 16S rRNA in the 30S particle. May play a critical role in biogenesis of 30S subunits. The polypeptide is Ribosomal RNA small subunit methyltransferase A (Clostridium acetobutylicum (strain ATCC 824 / DSM 792 / JCM 1419 / IAM 19013 / LMG 5710 / NBRC 13948 / NRRL B-527 / VKM B-1787 / 2291 / W)).